Here is a 269-residue protein sequence, read N- to C-terminus: Glutamate 5-kinase (269 aa).

Lys-14 contacts ATP. The substrate site is built by Ser-54, Asp-141, and Asn-157. ATP is bound by residues 177–178 (SD) and 219–225 (TGGMVTK).

It belongs to the glutamate 5-kinase family.

The protein resides in the cytoplasm. The catalysed reaction is L-glutamate + ATP = L-glutamyl 5-phosphate + ADP. It participates in amino-acid biosynthesis; L-proline biosynthesis; L-glutamate 5-semialdehyde from L-glutamate: step 1/2. Its function is as follows. Catalyzes the transfer of a phosphate group to glutamate to form L-glutamate 5-phosphate. This is Glutamate 5-kinase from Clostridium perfringens (strain 13 / Type A).